The chain runs to 314 residues: Serine protease 46 (314 aa).

In terms of domain architecture, Peptidase S1 spans V44 to G281. Cysteines 69 and 85 form a disulfide. Active-site charge relay system residues include H84 and D130. Intrachain disulfides connect C164/C239, C197/C219, and C229/C257. The Charge relay system role is filled by S233. A helical transmembrane segment spans residues F293–L313.

The protein belongs to the peptidase S1 family.

Its subcellular location is the membrane. In Mus musculus (Mouse), this protein is Serine protease 46 (Prss46).